Here is a 135-residue protein sequence, read N- to C-terminus: Transcription antitermination protein NusB (135 aa).

It belongs to the NusB family.

Its function is as follows. Involved in transcription antitermination. Required for transcription of ribosomal RNA (rRNA) genes. Binds specifically to the boxA antiterminator sequence of the ribosomal RNA (rrn) operons. The protein is Transcription antitermination protein NusB of Clostridium perfringens (strain SM101 / Type A).